A 492-amino-acid chain; its full sequence is Glutamyl-tRNA(Gln) amidotransferase subunit A (492 aa).

Catalysis depends on charge relay system residues Lys78 and Ser158. Residue Ser182 is the Acyl-ester intermediate of the active site.

The protein belongs to the amidase family. GatA subfamily. As to quaternary structure, heterotrimer of A, B and C subunits.

The enzyme catalyses L-glutamyl-tRNA(Gln) + L-glutamine + ATP + H2O = L-glutaminyl-tRNA(Gln) + L-glutamate + ADP + phosphate + H(+). Its function is as follows. Allows the formation of correctly charged Gln-tRNA(Gln) through the transamidation of misacylated Glu-tRNA(Gln) in organisms which lack glutaminyl-tRNA synthetase. The reaction takes place in the presence of glutamine and ATP through an activated gamma-phospho-Glu-tRNA(Gln). This is Glutamyl-tRNA(Gln) amidotransferase subunit A from Orientia tsutsugamushi (strain Ikeda) (Rickettsia tsutsugamushi).